Consider the following 250-residue polypeptide: 5-oxoprolinase subunit A (250 aa).

The protein belongs to the LamB/PxpA family. As to quaternary structure, forms a complex composed of PxpA, PxpB and PxpC.

It carries out the reaction 5-oxo-L-proline + ATP + 2 H2O = L-glutamate + ADP + phosphate + H(+). In terms of biological role, catalyzes the cleavage of 5-oxoproline to form L-glutamate coupled to the hydrolysis of ATP to ADP and inorganic phosphate. The sequence is that of 5-oxoprolinase subunit A from Staphylococcus aureus (strain MRSA252).